A 445-amino-acid chain; its full sequence is Phosphoglucosamine mutase (445 aa).

The active-site Phosphoserine intermediate is the Ser-102. Mg(2+) contacts are provided by Ser-102, Asp-241, Asp-243, and Asp-245. The residue at position 102 (Ser-102) is a Phosphoserine.

This sequence belongs to the phosphohexose mutase family. Mg(2+) is required as a cofactor. Activated by phosphorylation.

The catalysed reaction is alpha-D-glucosamine 1-phosphate = D-glucosamine 6-phosphate. Functionally, catalyzes the conversion of glucosamine-6-phosphate to glucosamine-1-phosphate. The polypeptide is Phosphoglucosamine mutase (Escherichia coli O127:H6 (strain E2348/69 / EPEC)).